A 284-amino-acid chain; its full sequence is uncharacterized protein (284 aa).

Positions 1–24 are cleaved as a signal peptide; that stretch reads MLYSRESRTTVLFLALVTSLTVLC. Topologically, residues 25-84 are cytoplasmic; sequence HSVDVTTVFTTSTITEITTVTAAPQPQNKAETALNTATNIIQTMQFLFNCAPFKWKGPLK. Residues 85 to 104 traverse the membrane as a helical segment; that stretch reads ITSCALNFIVLLLTAWGYLL. At 105-284 the chain is on the extracellular side; the sequence is KYLQENKLNS…SVHMYSSSLL (180 aa). Residue Asn270 is glycosylated (N-linked (GlcNAc...) asparagine).

It to yeast YNL019c.

The protein resides in the cell membrane. This is an uncharacterized protein from Saccharomyces cerevisiae (strain ATCC 204508 / S288c) (Baker's yeast).